The chain runs to 159 residues: Cytochrome c-type biogenesis protein CcmE (159 aa).

Over 1–8 the chain is Cytoplasmic; it reads MNIRRKNR. A helical; Signal-anchor for type II membrane protein transmembrane segment spans residues 9–29; sequence LWIACAVLAGLALTIGLVLYA. The Periplasmic portion of the chain corresponds to 30–159; that stretch reads LRSNIDLFYT…PASVYKDPAS (130 aa). Heme-binding residues include His130 and Tyr134. The span at 134-147 shows a compositional bias: basic and acidic residues; sequence YTPPEVEKAMEANH. The segment at 134 to 159 is disordered; the sequence is YTPPEVEKAMEANHRRPASVYKDPAS.

This sequence belongs to the CcmE/CycJ family.

The protein localises to the cell inner membrane. Heme chaperone required for the biogenesis of c-type cytochromes. Transiently binds heme delivered by CcmC and transfers the heme to apo-cytochromes in a process facilitated by CcmF and CcmH. The sequence is that of Cytochrome c-type biogenesis protein CcmE from Escherichia coli (strain SMS-3-5 / SECEC).